The sequence spans 429 residues: CinA-like protein (429 aa).

It belongs to the CinA family.

The polypeptide is CinA-like protein (Prochlorococcus marinus (strain MIT 9313)).